Consider the following 179-residue polypeptide: Probable DNA-directed RNA polymerase subunit delta (179 aa).

An HTH HARE-type domain is found at 14-81; it reads MSLVELAYEI…GDQRWGLRSW (68 aa). A disordered region spans residues 108–179; that stretch reads VVEEDFDEIE…DDLDDNEEEK (72 aa). Positions 109 to 179 are enriched in acidic residues; the sequence is VEEDFDEIEE…DDLDDNEEEK (71 aa).

This sequence belongs to the RpoE family. In terms of assembly, RNAP is composed of a core of 2 alpha, a beta and a beta' subunits. The core is associated with a delta subunit and one of several sigma factors.

Functionally, participates in both the initiation and recycling phases of transcription. In the presence of the delta subunit, RNAP displays an increased specificity of transcription, a decreased affinity for nucleic acids, and an increased efficiency of RNA synthesis because of enhanced recycling. This chain is Probable DNA-directed RNA polymerase subunit delta, found in Bacillus pumilus (strain SAFR-032).